A 195-amino-acid chain; its full sequence is Calcineurin B homologous protein 1 (195 aa).

A lipid anchor (N-myristoyl glycine) is attached at Gly-2. The Necessary for association with microtubule and interaction with GAPDH motif lies at 2-6; the sequence is GSRAS. EF-hand domains follow at residues 26-61, 66-101, 110-145, and 151-186; these read SQIT…AINP, IINA…KSKD, SRSN…MVGV, and QLGS…VDVE. Ca(2+) is bound by residues Asp-123, Asp-125, Asp-127, Lys-129, and Glu-134. A Nuclear export signal 1 motif is present at residues 138 to 147; sequence VLRMMVGVNI. The interval 143-185 is necessary for nuclear export signal; the sequence is VGVNISDEQLGSIADRTIQEADQDGDSAISFTEFVKVLEKVDV. Asp-164, Asp-166, Asp-168, and Glu-175 together coordinate Ca(2+). The short motif at 176–185 is the Nuclear export signal 2 element; the sequence is FVKVLEKVDV.

The protein belongs to the calcineurin regulatory subunit family. CHP subfamily. In terms of assembly, monomer. Interacts with STK17B; the interaction occurs in a calcium-independent manner and induces the translocation of CHP1 from the Golgi to the nucleus. Interacts with GAPDH; the interaction is direct, occurs in a N-myristoylation-dependent manner and facilitates the ability of CHP1 to bind microtubules. Interacts with KIF1B (via the C-terminal end of the kinesin-motor domain); the interaction occurs in a calcium-dependent manner. Associates (via C-terminal domain) with microtubules; the association occurs with polymerized microtubules during the cell cycle in a myristoylation- and calcium-independent manner and is enhanced by GAPDH. Interacts with PPP3CA. Interacts with SLC9A1/NHE1 (via the C-terminal domain); the interaction occurs at the plasma membrane in a calcium-dependent manner and at a domain that is critical for growth factor stimulation of the exchanger. Interacts with SLC9A3; increases SLC9A3 trafficking and activity at the plasma membrane. In terms of processing, phosphorylated; decreased phosphorylation is associated with an increase in SLC9A1/NHE1 Na(+)/H(+) exchange activity. Phosphorylation occurs in serum-dependent manner. The phosphorylation state may regulate the binding to SLC9A1/NHE1. Post-translationally, both N-myristoylation and calcium-mediated conformational changes are essential for its function in exocytic traffic. N-myristoylation is required for its association with microtubules and interaction with GAPDH, but not for the constitutive association to membranes. Ubiquitously expressed. Has been found in fetal eye, lung, liver, muscle, heart, kidney, thymus and spleen.

The protein localises to the nucleus. It localises to the cytoplasm. It is found in the cytoskeleton. The protein resides in the endomembrane system. Its subcellular location is the endoplasmic reticulum-Golgi intermediate compartment. The protein localises to the endoplasmic reticulum. It localises to the cell membrane. It is found in the membrane. Its function is as follows. Calcium-binding protein involved in different processes such as regulation of vesicular trafficking, plasma membrane Na(+)/H(+) exchanger and gene transcription. Involved in the constitutive exocytic membrane traffic. Mediates the association between microtubules and membrane-bound organelles of the endoplasmic reticulum and Golgi apparatus and is also required for the targeting and fusion of transcytotic vesicles (TCV) with the plasma membrane. Functions as an integral cofactor in cell pH regulation by controlling plasma membrane-type Na(+)/H(+) exchange activity. Affects the pH sensitivity of SLC9A1/NHE1 by increasing its sensitivity at acidic pH. Required for the stabilization and localization of SLC9A1/NHE1 at the plasma membrane. Inhibits serum- and GTPase-stimulated Na(+)/H(+) exchange. Plays a role as an inhibitor of ribosomal RNA transcription by repressing the nucleolar UBF1 transcriptional activity. May sequester UBF1 in the nucleoplasm and limit its translocation to the nucleolus. Associates to the ribosomal gene promoter. Acts as a negative regulator of the calcineurin/NFAT signaling pathway. Inhibits NFAT nuclear translocation and transcriptional activity by suppressing the calcium-dependent calcineurin phosphatase activity. Also negatively regulates the kinase activity of the apoptosis-induced kinase STK17B. Inhibits both STK17B auto- and substrate-phosphorylations in a calcium-dependent manner. The polypeptide is Calcineurin B homologous protein 1 (CHP1) (Homo sapiens (Human)).